Here is an 809-residue protein sequence, read N- to C-terminus: Integrin beta pat-3 (809 aa).

An N-terminal signal peptide occupies residues 1 to 19 (MPPSTSLLLLAALLPFALP). Residues 20–737 (ASDWKTGEVT…KHKDCPPPVP (718 aa)) are Extracellular-facing. N47, N141, N269, N373, and N400 each carry an N-linked (GlcNAc...) asparagine glycan. Positions 153–352 (DLYYLMDLSY…IFAVTKNNQD (200 aa)) constitute a VWFA domain. 15 disulfides stabilise this stretch: C476–C496, C489–C499, C501–C510, C512–C543, C526–C541, C535–C546, C548–C563, C565–C586, C570–C584, C578–C589, C591–C600, C602–C625, C609–C623, C617–C628, and C630–C644. 4 I-EGF domains span residues 476–511 (CERQ…KYCE), 512–564 (CNRP…EFCE), 565–601 (CDNF…RACE), and 602–645 (CPIS…AKCE). N530 carries N-linked (GlcNAc...) asparagine glycosylation. 3 N-linked (GlcNAc...) asparagine glycosylation sites follow: N672, N693, and N721. A helical transmembrane segment spans residues 738–758 (VLAIVLGVIAGIVILGILLLL). At 759-809 (LWKLLTVLHDRSEYATFNNERLMAKWDTNENPIYKQATTTFKNPVYAGKAN) the chain is on the cytoplasmic side. Phosphotyrosine is present on Y792.

Belongs to the integrin beta chain family. In terms of assembly, heterodimer of an alpha and a beta subunit. Interacts with alpha subunit ina-1. Interacts with alpha subunit pat-2. Component of an integrin containing attachment complex, composed of at least pat-2, pat-3, pat-4, pat-6, unc-52, unc-97 and unc-112. May interact with tns-1 (via C-terminus). Phosphorylated. Dephosphorylated by dep-1. Expressed in body wall muscles (at protein level). Expressed in gonadal sheath cells and spermatheca. Expressed in vulval cells and along the basal laminae that separate the vulval cells from the uterus (at the protein level).

The protein localises to the cell membrane. The protein resides in the lateral cell membrane. It is found in the basolateral cell membrane. It localises to the cytoplasm. Its subcellular location is the myofibril. The protein localises to the sarcomere. The protein resides in the m line. It is found in the cell junction. It localises to the focal adhesion. In terms of biological role, integrin alpha ina-1/beta pat-3 is a receptor for laminin. Integrin alpha pat-2/beta pat-3 recognizes the sequence R-G-D in its ligands. Plays a role in cell migration, morphogenesis and probably in cell-cell interactions. During gonad morphogenesis, involved in distal tip cell (DTC)-mediated guidance of gonad elongation, in maintaining their sharp tapering morphology and in their migration. Component of an integrin containing attachment complex, which is required for muscle development and maintenance. Involved in the assembly of dense bodies and M lines during body wall muscle embryonic development by recruiting one of their components, cpna-1, to integrin-mediated attachment sites. May play a similar role in the assembly of dense bodies in gonadal myoepithelial sheath cells. Probably by acting as a receptor for apoptotic cells, plays a role in the clearance of apoptotic cells during mid-embryogenesis. Required for ovulation. Dephosphorylated, probably within the alpha pat-2/beta pat-3 integrin receptor complex, by the phosphatase dep-1, which leads to down-stream effects including the negative regulation of let-23 signaling and vulval induction. When unphosphosphorylated, recruits the cytoplasmic adapter protein tln-1 to the plasma membrane of secondary vulval precursor cells. This promotes the linking of focal adhesion sites to the F-actin cytoskeleton, and it also acts to restrict the mobility of the let-23 receptor on the plasma membrane of vulval cells which thereby attenuates let-23 signaling. Plays a role in axon regeneration after injury. This chain is Integrin beta pat-3, found in Caenorhabditis elegans.